A 324-amino-acid polypeptide reads, in one-letter code: N-acetyl-gamma-glutamyl-phosphate reductase (324 aa).

Cys131 is a catalytic residue.

It belongs to the NAGSA dehydrogenase family. Type 1 subfamily.

The protein resides in the cytoplasm. It catalyses the reaction N-acetyl-L-glutamate 5-semialdehyde + phosphate + NADP(+) = N-acetyl-L-glutamyl 5-phosphate + NADPH + H(+). It functions in the pathway amino-acid biosynthesis; L-arginine biosynthesis; N(2)-acetyl-L-ornithine from L-glutamate: step 3/4. Functionally, catalyzes the NADPH-dependent reduction of N-acetyl-5-glutamyl phosphate to yield N-acetyl-L-glutamate 5-semialdehyde. The polypeptide is N-acetyl-gamma-glutamyl-phosphate reductase (Bradyrhizobium sp. (strain ORS 278)).